Here is a 975-residue protein sequence, read N- to C-terminus: Importin-11 (975 aa).

Position 1 is an N-acetylmethionine (Met-1). The 73-residue stretch at Ala-28–Glu-100 folds into the Importin N-terminal domain. HEAT repeat units lie at residues Arg-123–Ser-160, Gln-283–Ile-317, Val-318–Phe-356, Gln-422–Leu-459, Trp-473–Lys-509, Asp-511–Phe-548, Pro-555–Val-593, Gly-600–Ala-636, Asn-640–Asn-677, Pro-683–Glu-720, Gln-731–Cys-773, Gln-819–Ala-849, Leu-850–Glu-887, and Met-957–Gly-974. The residue at position 343 (Ser-343) is a Phosphoserine.

This sequence belongs to the importin beta family. In terms of assembly, interacts with UBE2E3 and RPL12.

It is found in the cytoplasm. The protein localises to the nucleus. In terms of biological role, functions in nuclear protein import as nuclear transport receptor. Serves as receptor for nuclear localization signals (NLS) in cargo substrates. Is thought to mediate docking of the importin/substrate complex to the nuclear pore complex (NPC) through binding to nucleoporin and the complex is subsequently translocated through the pore by an energy requiring, Ran-dependent mechanism. At the nucleoplasmic side of the NPC, Ran binds to the importin, the importin/substrate complex dissociates and importin is re-exported from the nucleus to the cytoplasm where GTP hydrolysis releases Ran. The directionality of nuclear import is thought to be conferred by an asymmetric distribution of the GTP- and GDP-bound forms of Ran between the cytoplasm and nucleus. Mediates the nuclear import of RPL12, and of UBE2E3. In Mus musculus (Mouse), this protein is Importin-11 (Ipo11).